The primary structure comprises 129 residues: Glycoprotein hormone alpha-2 (129 aa).

An N-terminal signal peptide occupies residues 1 to 23; it reads MPMASPQTLVLYLLVLAVTEAWG. 4 cysteine pairs are disulfide-bonded: C31-C89, C48-C103, C57-C119, and C61-C121. 2 N-linked (GlcNAc...) asparagine glycosylation sites follow: N37 and N81.

Belongs to the glycoprotein hormones subunit alpha family. In terms of assembly, heterodimer with GPHB5; this heterodimer interacts with thyroid-stimulating hormone receptor (TSHR), and hence stimulates cAMP production. Glycosylated. In terms of tissue distribution, found in a variety of tissues.

It localises to the secreted. In terms of biological role, functions as a heterodimeric glycoprotein hormone with GPHB5 able to bind and activate the thyroid-stimulating hormone receptor (TSHR), leading to increased cAMP production. Plays a central role in controlling thyroid cell metabolism. The sequence is that of Glycoprotein hormone alpha-2 (GPHA2) from Homo sapiens (Human).